We begin with the raw amino-acid sequence, 864 residues long: DNA mismatch repair protein MutS (864 aa).

An ATP-binding site is contributed by 607 to 614 (GPNMGGKS).

It belongs to the DNA mismatch repair MutS family.

This protein is involved in the repair of mismatches in DNA. It is possible that it carries out the mismatch recognition step. This protein has a weak ATPase activity. The protein is DNA mismatch repair protein MutS of Neisseria meningitidis serogroup C (strain 053442).